The chain runs to 336 residues: Eukaryotic translation initiation factor 3 subunit I (336 aa).

6 WD repeats span residues Gly-8–Asn-49, Gly-50–Glu-91, Pro-93–Pro-135, Pro-144–Ser-183, Asn-187–Ser-226, and Gly-285–Lys-324.

Belongs to the eIF-3 subunit I family. Component of the eukaryotic translation initiation factor 3 (eIF-3) complex.

The protein localises to the cytoplasm. Functionally, component of the eukaryotic translation initiation factor 3 (eIF-3) complex, which is involved in protein synthesis of a specialized repertoire of mRNAs and, together with other initiation factors, stimulates binding of mRNA and methionyl-tRNAi to the 40S ribosome. The eIF-3 complex specifically targets and initiates translation of a subset of mRNAs involved in cell proliferation. The polypeptide is Eukaryotic translation initiation factor 3 subunit I (Puccinia graminis f. sp. tritici (strain CRL 75-36-700-3 / race SCCL) (Black stem rust fungus)).